An 88-amino-acid polypeptide reads, in one-letter code: Apolipoprotein C-I (88 aa).

Positions 1–26 (MRLFIALPVLIVVVAMALEGPAPAQA) are cleaved as a signal peptide.

Belongs to the apolipoprotein C1 family.

It localises to the secreted. In terms of biological role, inhibitor of lipoprotein binding to the low density lipoprotein (LDL) receptor, LDL receptor-related protein, and very low density lipoprotein (VLDL) receptor. Associates with high density lipoproteins (HDL) and the triacylglycerol-rich lipoproteins in the plasma and makes up about 10% of the protein of the VLDL and 2% of that of HDL. Appears to interfere directly with fatty acid uptake and is also the major plasma inhibitor of cholesteryl ester transfer protein (CETP). Binds free fatty acids and reduces their intracellular esterification. Modulates the interaction of APOE with beta-migrating VLDL and inhibits binding of beta-VLDL to the LDL receptor-related protein. The protein is Apolipoprotein C-I (Apoc1) of Rattus norvegicus (Rat).